The following is a 638-amino-acid chain: Chaperone protein DnaK (638 aa).

Thr-197 bears the Phosphothreonine; by autocatalysis mark. Positions 600–638 are disordered; the sequence is SGAQGGAQAGPGAGAGQQANQGSSNNKEDIQDADFEEVK. Residues 602–614 show a composition bias toward gly residues; sequence AQGGAQAGPGAGA. A compositionally biased stretch (low complexity) spans 615–624; it reads GQQANQGSSN. The span at 625 to 638 shows a compositional bias: basic and acidic residues; sequence NKEDIQDADFEEVK.

Belongs to the heat shock protein 70 family.

Functionally, acts as a chaperone. This is Chaperone protein DnaK from Phocaeicola vulgatus (strain ATCC 8482 / DSM 1447 / JCM 5826 / CCUG 4940 / NBRC 14291 / NCTC 11154) (Bacteroides vulgatus).